A 246-amino-acid polypeptide reads, in one-letter code: Acetoacetyl-CoA reductase (246 aa).

NADP(+) is bound by residues Gly-12–Ile-14 and Cys-88–Thr-92. Substrate is bound by residues Asp-94 and Gln-147 to Gln-150. The active-site Proton acceptor is the Tyr-153. Residue Pro-183 to Val-186 participates in NADP(+) binding. Gly-184–Tyr-185 provides a ligand contact to substrate.

This sequence belongs to the short-chain dehydrogenases/reductases (SDR) family.

It localises to the cytoplasm. The catalysed reaction is a (3R)-3-hydroxyacyl-CoA + NADP(+) = a 3-oxoacyl-CoA + NADPH + H(+). Its pathway is biopolymer metabolism; poly-(R)-3-hydroxybutanoate biosynthesis. In Allochromatium vinosum (strain ATCC 17899 / DSM 180 / NBRC 103801 / NCIMB 10441 / D) (Chromatium vinosum), this protein is Acetoacetyl-CoA reductase.